The chain runs to 732 residues: Segment polarity protein dishevelled homolog DVL-2 (732 aa).

The DIX domain occupies 1–82 (MAETKVIYHL…RVVSWLVSSE (82 aa)). Disordered stretches follow at residues 81–181 (SETS…SSST) and 195–237 (EEDD…SSFS). Residues 98–111 (DPPPVPPPVPPPPA) are compositionally biased toward pro residues. The span at 146 to 157 (MRRDRVRRRDST) shows a compositional bias: basic and acidic residues. Polar residues predominate over residues 202–213 (RFSSSTEQSSAS). The segment covering 215–227 (LLKRHRRRRKQRP) has biased composition (basic residues). A PDZ domain is found at 250-335 (TVTLNMEKYN…KPGPIILTVA (86 aa)). In terms of domain architecture, DEP spans 424-498 (PESGLEVRDR…SEQCYYIFGD (75 aa)). 3 stretches are compositionally biased toward low complexity: residues 570–589 (MGSA…SNRS), 612–629 (KSGS…SIRR), and 637–647 (PPSERSTSSRP). The segment at 570–660 (MGSAGSQHSE…HPPSVHSYAA (91 aa)) is disordered.

The protein belongs to the DSH family. As to quaternary structure, can form homomultimers. Interacts with prickle1. Interacts (via the PDZ domain) with ccdc88c/dal and dact1-B/dpr. Interacts (via the DIX domain) with ARP/Axin-related protein and dact1-A/frodo. Interacts with sdc4, possibly via fz7. Interacts directly (via the DEP domain) with efnb1/ephrin-B1. May interact indirectly with the phosphorylated ephrin receptors ephb1 and ephb2 via SH domain-containing adapters. In terms of processing, phosphorylated. Phosphorylation is controlled by frizzled proteins, correlates with the onset of embryo dorsalizing events and is higher in the dorsal half of early cleavage embryos. Phosphorylated on tyrosine residues in response to association with efnb1/ephrin-B1.

It localises to the cytoplasm. The protein resides in the cytoplasmic vesicle. It is found in the cell projection. The protein localises to the cilium. Its subcellular location is the nucleus. It localises to the cell membrane. In terms of biological role, involved in at least 2 independent signaling cascades, controlling cell fate via canonical Wnt signaling and cell polarity via a planar cell polarity (PCP) cascade. Acts synergistically with dal/dapple-like to activate Wnt signaling, stabilizing ctnnb1/beta-catenin and leading to dorsal axis formation. Also prevents degradation of ctnnb1/beta-catenin by displacing gsk3 from a complex with ARP/Axin-related protein. Has an additional role in anterior-posterior (A/P) axis formation, specifying different neuroectodermal cell fates along the A/P axis in a dose-dependent manner by activating several early patterning genes. In the PCP pathway, required at the cell membrane for PCP-mediated neural and mesodermal convergent extension during gastrulation and subsequent neural tube closure, acting to activate jnk. Also involved in blastopore closure and archenteron elongation during early, but not late, gastrulation. Associates with ephrin receptors and ligands and acts as part of a downstream PCP pathway to mediate ephrin-mediated cell repulsion via activation of rhoa. Required for efnb1/ephrin-B1-driven movement of non-retinal progenitor cells into the retina during eye field formation. Patterns the hindbrain. Required for ciliogenesis. Controls the docking of basal bodies to the apical plasma membrane; mediates the activation, but not localization of rhoa at the apical surface of ciliated cells during basal body docking. Furthermore, required for the association of basal bodies with membrane-bound vesicles and the vesicle-trafficking protein exoc4/sec8, and this association is in turn required for basal body docking. Once basal bodies are docked, required for the planar polarization of basal bodies that underlies ciliary beating and the directional fluid flow across ciliated epithelia. The protein is Segment polarity protein dishevelled homolog DVL-2 of Xenopus tropicalis (Western clawed frog).